The primary structure comprises 505 residues: MTEQKYVVALDQGTTSSRAVVLDHDANIVSVSQREFTQIYPQAGWVEHDPMEIYATQSSTLVEALGKAGIRSDEVAAIGITNQRETTVVWNKETGKPVYNAIVWQCRRTAAICEELKARGLESYIRDNTGLVLDPYFSGTKIKWILDNVEGAREQAEAGQLLFGTVDTWLVWKMTQGRVHVTDYTNASRTMLFNINTLQWDEKILAEFNIPLSMMPEVKKSSEVYGQTNIGGKGGTRIPIAGIAGDQQAALYGQMCVQAGQAKNTYGTGCFLLMNTGQEKVTSNNGLLTTLACGPRGEPAYALEGAVFMGGASIQWLRDELKLISDARDSEYFATKVDTSNGVYVVPAFTGLGAPYWDAYARGTIVGLTRGVNSNHIIRATLESIAYQTRDVLDAMQADSGIKLSALRVDGGAVANNFLMQFQADVLDTEVHRPKVTEVTALGAAYLAGLAVGFWDGLEELQGKAEIDRSFKPHHDEEKRQRRYKGWKRAVKCAQAWAVLHNEEE.

Thr-14 provides a ligand contact to ADP. 3 residues coordinate ATP: Thr-14, Thr-15, and Ser-16. Residue Thr-14 coordinates sn-glycerol 3-phosphate. Arg-18 is an ADP binding site. Positions 84, 85, 136, and 246 each coordinate sn-glycerol 3-phosphate. 5 residues coordinate glycerol: Arg-84, Glu-85, Tyr-136, Asp-246, and Gln-247. Positions 268 and 311 each coordinate ADP. Residues Thr-268, Gly-311, Gln-315, and Gly-412 each contribute to the ATP site. 2 residues coordinate ADP: Gly-412 and Asn-416.

It belongs to the FGGY kinase family.

It carries out the reaction glycerol + ATP = sn-glycerol 3-phosphate + ADP + H(+). The protein operates within polyol metabolism; glycerol degradation via glycerol kinase pathway; sn-glycerol 3-phosphate from glycerol: step 1/1. With respect to regulation, inhibited by fructose 1,6-bisphosphate (FBP). In terms of biological role, key enzyme in the regulation of glycerol uptake and metabolism. Catalyzes the phosphorylation of glycerol to yield sn-glycerol 3-phosphate. The polypeptide is Glycerol kinase (Vibrio cholerae serotype O1 (strain M66-2)).